The sequence spans 253 residues: Acidic endochitinase pcht28 (253 aa).

An N-terminal signal peptide occupies residues 1–24 (MKFNIVSPVALSCLFFLFLTGTLA). E92 serves as the catalytic Proton donor. An intrachain disulfide couples C212 to C244.

Belongs to the glycosyl hydrolase 19 family. Chitinase class II subfamily.

Its subcellular location is the secreted. It is found in the extracellular space. It carries out the reaction Random endo-hydrolysis of N-acetyl-beta-D-glucosaminide (1-&gt;4)-beta-linkages in chitin and chitodextrins.. Functionally, defense against chitin-containing fungal pathogens. This Solanum chilense (Tomato) protein is Acidic endochitinase pcht28.